We begin with the raw amino-acid sequence, 700 residues long: Kin of IRRE-like protein 2 (700 aa).

Positions 1–19 are cleaved as a signal peptide; it reads MLASALLVFLCCFKGHAGS. The Extracellular segment spans residues 20–507; the sequence is SPHFLQQPED…GRRDLLPTVR (488 aa). 5 Ig-like C2-type domains span residues 21-115, 120-219, 224-304, 309-391, and 395-497; these read PHFL…AQLH, PEAP…VTLS, PMVT…TALE, PILQ…ARLT, and PPVV…QIHL. An intrachain disulfide couples cysteine 42 to cysteine 100. A glycan (N-linked (GlcNAc...) asparagine) is linked at asparagine 140. Disulfide bonds link cysteine 143/cysteine 201 and cysteine 245/cysteine 288. Positions 146 to 148 match the Cell attachment site motif; the sequence is RGD. Residue asparagine 298 is glycosylated (N-linked (GlcNAc...) asparagine). 2 disulfides stabilise this stretch: cysteine 330/cysteine 372 and cysteine 416/cysteine 482. Asparagine 481 is a glycosylation site (N-linked (GlcNAc...) asparagine). The helical transmembrane segment at 508-528 threads the bilayer; it reads IVAGAASAATSLLMVITGVVL. Topologically, residues 529–700 are cytoplasmic; sequence CCWRHGSLSK…PSHQRLQTHV (172 aa). The segment at 542 to 576 is disordered; sequence LVRIPGSSEGSSSRGPEEETGSSEDRGPIVHTDHS. Serine 563 carries the phosphoserine modification. Basic and acidic residues predominate over residues 564 to 576; sequence SEDRGPIVHTDHS. Phosphotyrosine is present on residues tyrosine 595, tyrosine 596, and tyrosine 653. Residues 671-700 are disordered; sequence FGPPELSSGTPPFPYATLSPPSHQRLQTHV. Polar residues predominate over residues 689–700; that stretch reads SPPSHQRLQTHV.

Belongs to the immunoglobulin superfamily. As to quaternary structure, homodimer. Interacts with NPHS2/podocin (via the C-terminus). Interacts with NPHS1 (via the Ig-like domains). Interacts with FYN. N-glycosylated. In terms of processing, phosphorylated at Ser-548 or Ser-549; due to site ambiguity, the exact position of the serine phosphorylation could not be determined. Phosphorylation at residues Tyr-631 and/or Tyr-632. FYN mediates tyrosine phosphorylation in pancreatic beta-cells. Post-translationally, the extracellular domain is cleaved leading to the generation of a soluble fragment and a membrane-bound C-terminal fragment, which is further cleaved by gamma-secretase. In terms of tissue distribution, highly expressed in beta-cells of the pancreatic islets. Expression is seen in podocytes of kidney glomeruli, and in the cerebellum and hindbrain at 12.5 dpc, in the spinal cord at 10.5 dpc, and in retina and hypothalamus at 13.5 dpc.

It is found in the cell membrane. Its function is as follows. May regulate basal insulin secretion. This Mus musculus (Mouse) protein is Kin of IRRE-like protein 2 (Kirrel2).